A 655-amino-acid chain; its full sequence is THO complex subunit 1 (655 aa).

Disordered regions lie at residues 403-427 (ERPA…LGKG) and 539-574 (PSEE…AVTN). The Nuclear localization signal signature appears at 415–431 (RKRQAPEDFLGKGPDRK). A compositionally biased stretch (basic and acidic residues) spans 418 to 427 (QAPEDFLGKG). Residues 563-574 (DSPSIQSKAVTN) show a composition bias toward polar residues. The Death domain occupies 573-655 (TNSQMDEIAA…NNIADNLSET (83 aa)).

In terms of assembly, component of the THO complex. Expressed in the developing neuromast.

The protein localises to the nucleus. The protein resides in the nucleoplasm. It localises to the nucleus matrix. Its subcellular location is the cytoplasm. It is found in the cytosol. Component of the THO subcomplex of the TREX complex which is thought to couple mRNA transcription, processing and nuclear export, and which specifically associates with spliced mRNA and not with unspliced pre-mRNA. Required for efficient export of polyadenylated RNA. The THOC1-THOC2-THOC3 core complex alone is sufficient to bind export factor NXF1-NXT1 and promote ATPase activity of DDX39B. TREX is recruited to spliced mRNAs by a transcription-independent mechanism, binds to mRNA upstream of the exon-junction complex (EJC) and is recruited in a splicing- and cap-dependent manner to a region near the 5' end of the mRNA where it functions in mRNA export to the cytoplasm via the TAP/NXF1 pathway. Regulates transcriptional elongation of a subset of genes. Involved in genome stability by preventing co-transcriptional R-loop formation. May play a role in hair cell formation, hence may be involved in hearing. Its function is as follows. Participates in an apoptotic pathway which is characterized by activation of caspase-6, increases in the expression of BAK1 and BCL2L1 and activation of NF-kappa-B. This pathway does not require p53/TP53, nor does the presence of p53/TP53 affect the efficiency of cell killing. Activates a G2/M cell cycle checkpoint prior to the onset of apoptosis. Apoptosis is inhibited by association with RB1. Essential for early embryonic development. Required for normal gene expression during postnatal testis development. This is THO complex subunit 1 (thoc1) from Danio rerio (Zebrafish).